A 446-amino-acid chain; its full sequence is MLKIIFFLLFLIPFCFINNMYWMVQIMMFFISFIFLLMNNFMNYWSEISYFLGCDMLSYGLILLSLWICSLMLLASEMINKHNNYKNLFLLNIIILLLLLILTFSSMSLFMFYLFFESSLIPTLFLILGWGYQPERLQAGLYLLFYTLLVSLPMLIGIFYLMNKIGSMNFYLMNNFMFNYDLLYFCLLCAFLVKMPMFLVHLWLPKAHVEAPVSGSMILAGIMLKLGGYGMLRVISFLQLMNLKYSFVWISISLVGGVLVSLVCLRQTDLKALIAYSSVAHMGIVLSGLLTMTYWGLCGSYTLMIAHGLCSSGLFCLANVSYERLGSRSMLINKGLLNFMPSMTLWWFLLSSANMAAPPTLNLLGEIYLLNSIVSWSWISMILLSFLSFFSAAYTLYLYSFSQHGKLFSGVYSFSSGKIREYLLMLLHWLPLNLLILKSESFMLWL.

13 helical membrane passes run 4 to 24, 56 to 76, 93 to 113, 114 to 134, 139 to 159, 182 to 202, 218 to 238, 245 to 265, 272 to 292, 297 to 317, 330 to 350, 373 to 393, and 426 to 446; these read IIFFLLFLIPFCFINNMYWMV, MLSYGLILLSLWICSLMLLAS, IIILLLLLILTFSSMSLFMFY, LFFESSLIPTLFLILGWGYQP, AGLYLLFYTLLVSLPMLIGIF, LLYFCLLCAFLVKMPMFLVHL, ILAGIMLKLGGYGMLRVISFL, YSFVWISISLVGGVLVSLVCL, ALIAYSSVAHMGIVLSGLLTM, LCGSYTLMIAHGLCSSGLFCL, MLINKGLLNFMPSMTLWWFLL, IVSWSWISMILLSFLSFFSAA, and LLHWLPLNLLILKSESFMLWL.

It belongs to the complex I subunit 4 family.

It is found in the mitochondrion membrane. The enzyme catalyses a ubiquinone + NADH + 5 H(+)(in) = a ubiquinol + NAD(+) + 4 H(+)(out). Functionally, core subunit of the mitochondrial membrane respiratory chain NADH dehydrogenase (Complex I) that is believed to belong to the minimal assembly required for catalysis. Complex I functions in the transfer of electrons from NADH to the respiratory chain. The immediate electron acceptor for the enzyme is believed to be ubiquinone. The protein is NADH-ubiquinone oxidoreductase chain 4 (mt:ND4) of Drosophila melanogaster (Fruit fly).